The primary structure comprises 250 residues: uncharacterized protein (250 aa).

Disordered stretches follow at residues 85 to 107 and 158 to 198; these read NQFP…QSEP and EPVP…AKVP. The span at 167–176 shows a compositional bias: low complexity; it reads PAVEQPQVKQ.

This is an uncharacterized protein from Mycoplasma pneumoniae (strain ATCC 29342 / M129 / Subtype 1) (Mycoplasmoides pneumoniae).